The chain runs to 44 residues: Large ribosomal subunit protein bL34 (44 aa).

The disordered stretch occupies residues 1 to 26 (MKMTFQPKKRQRAKVHGFRQRMKTAG). Residues 7–22 (PKKRQRAKVHGFRQRM) show a composition bias toward basic residues.

It belongs to the bacterial ribosomal protein bL34 family.

The sequence is that of Large ribosomal subunit protein bL34 from Agathobacter rectalis (strain ATCC 33656 / DSM 3377 / JCM 17463 / KCTC 5835 / VPI 0990) (Eubacterium rectale).